A 2615-amino-acid chain; its full sequence is Collagen alpha-5(VI) chain (2615 aa).

The signal sequence occupies residues 1-18; that stretch reads MKILLIIFVLIIWTETLA. Residues 19–1394 are nonhelical region; that stretch reads DQSPGPGPVY…TCCCTFCKCP (1376 aa). VWFA domains lie at 30–209, 236–413, 442–612, 628–797, 814–987, 1005–1178, and 1194–1376; these read DVVF…IKDV, DLVF…LKKL, DIHF…KNEV, DIMF…ERKL, DVVF…FTLV, DVIF…KKRI, and DIVV…KLSQ. N-linked (GlcNAc...) asparagine glycosylation is found at asparagine 201 and asparagine 260. Asparagine 835 is a glycosylation site (N-linked (GlcNAc...) asparagine). Collagen-like domains are found at residues 1395 to 1446, 1434 to 1490, 1464 to 1520, 1524 to 1580, 1579 to 1629, and 1674 to 1729; these read GIPG…GCPG, GPQG…KGDP, GDDG…PGQN, KGQK…TLGA, GAEG…LGKK, and GDAG…MAGQ. The segment at 1395-1728 is triple-helical region; sequence GIPGPHGTRG…GQRGIKGMAG (334 aa). The interval 1404 to 1693 is disordered; sequence GLQAMKGSQG…NPGIPGGPGP (290 aa). Positions 1430–1432 match the Cell attachment site motif; that stretch reads RGD. Residues 1511–1522 show a composition bias toward low complexity; sequence PGDPGNPGQNNN. Low complexity-rich tracts occupy residues 1601-1611 and 1622-1641; these read SQGQKGPQGSP and RPGL…LGPV. A nonhelical region region spans residues 1729–2615; sequence QPVYSQCDLI…EDKEMEATDI (887 aa). 3 VWFA domains span residues 1758–1965, 1963–2154, and 2291–2487; these read ELVF…MDVV, DVVF…AKFL, and DVAF…VKPF. Asparagine 2509 carries an N-linked (GlcNAc...) asparagine glycan.

This sequence belongs to the type VI collagen family. In terms of assembly, trimers composed of three different chains: alpha-1(VI), alpha-2(VI), and alpha-3(VI) or alpha-5(VI) or alpha-6(VI). In terms of processing, prolines at the third position of the tripeptide repeating unit (G-X-Y) are hydroxylated in some or all of the chains. Expressed in skin, followed by lung, small intestine, colon and testis. In skin, it is expressed in the epidermis with strongest staining in suprabasal viable layers. In ATOD patients, it is absent in the most differentiated upper spinous and granular layers (at protein level).

The protein resides in the secreted. Its subcellular location is the extracellular space. The protein localises to the extracellular matrix. Its function is as follows. Collagen VI acts as a cell-binding protein. This Homo sapiens (Human) protein is Collagen alpha-5(VI) chain (COL6A5).